The chain runs to 329 residues: Cardiolipin synthase (CMP-forming) (329 aa).

A mitochondrion-targeting transit peptide spans 1–34 (MPPSVATHASLLLKAAAAAAHLHPKPFFSPRAAP). The interval 27-55 (FFSPRAAPPRIPSAPAPPAAGGSRYRPTT) is disordered. Pro residues predominate over residues 32 to 44 (AAPPRIPSAPAPP). 5 helical membrane-spanning segments follow: residues 134–154 (LLTLPTVLTIGRVAAVPLLIS), 156–176 (FYMEGPWAATATTGIFLAAAV), 194–214 (FGAFLDPVADKLMVAATLVLL), 228–248 (PWLLTVPAIAIIGREITMSAV), and 298–318 (VTSGIALLYVSAGLAIWSLVV). The Mitochondrial intermembrane portion of the chain corresponds to 319–329 (YMRKIWRILLK).

This sequence belongs to the CDP-alcohol phosphatidyltransferase class-I family. The cofactor is Mn(2+).

It is found in the mitochondrion inner membrane. The enzyme catalyses a CDP-1,2-diacyl-sn-glycerol + a 1,2-diacyl-sn-glycero-3-phospho-(1'-sn-glycerol) = a cardiolipin + CMP + H(+). In terms of biological role, catalyzes the synthesis of cardiolipin (CL) (diphosphatidylglycerol) by specifically transferring a phosphatidyl group from CDP-diacylglycerol to phosphatidylglycerol (PG). CL is a key phospholipid in mitochondrial membranes and plays important roles in maintaining the functional integrity and dynamics of mitochondria under both optimal and stress conditions. This is Cardiolipin synthase (CMP-forming) from Oryza sativa subsp. japonica (Rice).